The sequence spans 156 residues: Ribosomal RNA large subunit methyltransferase H (156 aa).

S-adenosyl-L-methionine is bound by residues Leu-73, Gly-104, and 123–128 (LSSLTL).

Belongs to the RNA methyltransferase RlmH family. In terms of assembly, homodimer.

It localises to the cytoplasm. It carries out the reaction pseudouridine(1915) in 23S rRNA + S-adenosyl-L-methionine = N(3)-methylpseudouridine(1915) in 23S rRNA + S-adenosyl-L-homocysteine + H(+). Specifically methylates the pseudouridine at position 1915 (m3Psi1915) in 23S rRNA. The sequence is that of Ribosomal RNA large subunit methyltransferase H from Bordetella bronchiseptica (strain ATCC BAA-588 / NCTC 13252 / RB50) (Alcaligenes bronchisepticus).